The chain runs to 452 residues: tRNA modification GTPase MnmE (452 aa).

Arg-22, Glu-79, and Lys-119 together coordinate (6S)-5-formyl-5,6,7,8-tetrahydrofolate. Residues Gly-215–Gly-375 form the TrmE-type G domain. Asn-225 contributes to the K(+) binding site. GTP-binding positions include Asn-225–Ser-230, Thr-244–Thr-250, Asp-269–Gly-272, and Asn-333–Asp-336. Ser-229 is a binding site for Mg(2+). K(+)-binding residues include Thr-244, Ile-246, and Thr-249. Thr-250 contributes to the Mg(2+) binding site. Lys-452 provides a ligand contact to (6S)-5-formyl-5,6,7,8-tetrahydrofolate.

The protein belongs to the TRAFAC class TrmE-Era-EngA-EngB-Septin-like GTPase superfamily. TrmE GTPase family. In terms of assembly, homodimer. Heterotetramer of two MnmE and two MnmG subunits. Requires K(+) as cofactor.

It is found in the cytoplasm. In terms of biological role, exhibits a very high intrinsic GTPase hydrolysis rate. Involved in the addition of a carboxymethylaminomethyl (cmnm) group at the wobble position (U34) of certain tRNAs, forming tRNA-cmnm(5)s(2)U34. This is tRNA modification GTPase MnmE from Histophilus somni (strain 2336) (Haemophilus somnus).